Consider the following 337-residue polypeptide: Heme A synthase (337 aa).

Helical transmembrane passes span 6 to 26 (ITKW…IGGI), 93 to 113 (GRIT…KDVI), 118 to 138 (ILPY…GWYM), 154 to 174 (LAFH…QLIK), and 192 to 212 (LIFS…GAMV). H256 is a binding site for heme. Helical transmembrane passes span 258–278 (LGGY…LKIE), 285–305 (IAYF…ITLL), and 308–328 (VPII…SIII). Residue H316 participates in heme binding.

This sequence belongs to the COX15/CtaA family. Type 2 subfamily. Interacts with CtaB. Heme b is required as a cofactor.

The protein resides in the cell membrane. It carries out the reaction Fe(II)-heme o + 2 A + H2O = Fe(II)-heme a + 2 AH2. The protein operates within porphyrin-containing compound metabolism; heme A biosynthesis; heme A from heme O: step 1/1. In terms of biological role, catalyzes the conversion of heme O to heme A by two successive hydroxylations of the methyl group at C8. The first hydroxylation forms heme I, the second hydroxylation results in an unstable dihydroxymethyl group, which spontaneously dehydrates, resulting in the formyl group of heme A. The protein is Heme A synthase of Rickettsia felis (strain ATCC VR-1525 / URRWXCal2) (Rickettsia azadi).